Here is a 702-residue protein sequence, read N- to C-terminus: Pseudouridylate synthase PUS7L (702 aa).

S79 is modified (phosphoserine). Positions 84 to 116 (NSEGAADLPGCSDGDRSHQSDSEKENSVNSVTS) are disordered. Basic and acidic residues predominate over residues 96–109 (DGDRSHQSDSEKEN). The Nucleophile role is filled by D339. The region spanning 424-646 (GFVNYYGPQR…PGCYRHIVKH (223 aa)) is the TRUD domain.

The protein belongs to the pseudouridine synthase TruD family.

It catalyses the reaction a uridine in mRNA = a pseudouridine in mRNA. In terms of biological role, pseudouridine synthase that catalyzes pseudouridylation of mRNAs. This is Pseudouridylate synthase PUS7L from Mus musculus (Mouse).